The chain runs to 241 residues: Bidirectional sugar transporter SWEET17 (241 aa).

The Vacuolar portion of the chain corresponds to 1-3; that stretch reads MAE. The chain crosses the membrane as a helical span at residues 4–24; it reads ASFYIGVIGNVISVLVFLSPV. The region spanning 6–92 is the MtN3/slv 1 domain; that stretch reads FYIGVIGNVI…SLFLFYAPRH (87 aa). Over 25 to 41 the chain is Cytoplasmic; the sequence is ETFWKIVKRRSTEEYKS. A helical transmembrane segment spans residues 42 to 62; it reads LPYICTLLGSSLWTYYGIVTP. The Vacuolar segment spans residues 63–69; that stretch reads GEYLVST. The chain crosses the membrane as a helical span at residues 70–90; the sequence is VNGFGALVETIYVSLFLFYAP. At 91 to 94 the chain is on the cytoplasmic side; it reads RHLK. The chain crosses the membrane as a helical span at residues 95–115; the sequence is LKTVDVDAMLNVFFPIAAIVA. The Vacuolar segment spans residues 116-128; the sequence is TRSAFEDEKMRSQ. A helical transmembrane segment spans residues 129-149; it reads SIGFISAGLNIIMYGSPLSAM. A MtN3/slv 2 domain is found at 129–212; the sequence is SIGFISAGLN…LILYGIYRNA (84 aa). Over 150 to 161 the chain is Cytoplasmic; that stretch reads KTVVTTKSVKYM. The chain crosses the membrane as a helical span at residues 162–182; that stretch reads PFWLSFFLFLNGAIWAVYALL. At 183–185 the chain is on the vacuolar side; the sequence is QHD. The chain crosses the membrane as a helical span at residues 186–206; it reads VFLLVPNGVGFVFGTMQLILY. Residues 207–241 lie on the Cytoplasmic side of the membrane; the sequence is GIYRNAKPVGLSNGLSEIAQDEEEGLTSRVEPLLS.

This sequence belongs to the SWEET sugar transporter family. As to quaternary structure, forms homooligomers and heterooligomers with SWEET1, SWEET2, SWEET3, SWEET4, SWEET6, SWEET7, SWEET8, SWEET9, SWEET11, SWEET12, SWEET13, SWEET15 and SWEET16. In terms of tissue distribution, expressed in leaves at low levels, mostly in xylem and parenchyma. Highly expressed in the cortex of roots, predominantly in tips and mature regions, especially in tonoplasts. Also accumulates in cotyledons, stems, flowers, and siliques.

It is found in the vacuole membrane. Functionally, acts as a vacuolar hexose transporter. Regulates fructose (Fru) homeostasis in leaves and roots by exporting/importing Fru through the tonoplast regarding metabolic demand. This is Bidirectional sugar transporter SWEET17 from Arabidopsis thaliana (Mouse-ear cress).